A 190-amino-acid polypeptide reads, in one-letter code: Probable calcium-binding protein CML27 (190 aa).

3 EF-hand domains span residues 27 to 62 (LNALRLRRVFDLFDRNGDGEITLDEMASALDALGLG), 115 to 150 (DDEGDMKEAFRVFDEDGDGFISAAELQAVLKKLGLP), and 153 to 188 (RNLATVQEMICNVDRDCDGRVDFGEFKCMMQGITVW). Residues Asp-40, Asn-42, Asp-44, Glu-46, Glu-51, Asp-128, Asp-130, Asp-132, Glu-139, Asp-166, Asp-168, Asp-170, Arg-172, and Glu-177 each coordinate Ca(2+).

Its function is as follows. Potential calcium sensor. This chain is Probable calcium-binding protein CML27 (CML27), found in Oryza sativa subsp. japonica (Rice).